We begin with the raw amino-acid sequence, 121 residues long: Small ribosomal subunit protein bS6 (121 aa).

Belongs to the bacterial ribosomal protein bS6 family.

Functionally, binds together with bS18 to 16S ribosomal RNA. In Rickettsia felis (strain ATCC VR-1525 / URRWXCal2) (Rickettsia azadi), this protein is Small ribosomal subunit protein bS6.